A 202-amino-acid polypeptide reads, in one-letter code: Peptide deformylase (202 aa).

The interval 1–24 is disordered; that stretch reads MAGSFAQLAKNAEKKKPSISVSKE. Fe cation is bound by residues Cys121 and His163. Glu164 is a catalytic residue. His167 contributes to the Fe cation binding site.

The protein belongs to the polypeptide deformylase family. The cofactor is Fe(2+).

The catalysed reaction is N-terminal N-formyl-L-methionyl-[peptide] + H2O = N-terminal L-methionyl-[peptide] + formate. Functionally, removes the formyl group from the N-terminal Met of newly synthesized proteins. Requires at least a dipeptide for an efficient rate of reaction. N-terminal L-methionine is a prerequisite for activity but the enzyme has broad specificity at other positions. In Prochlorococcus marinus (strain NATL2A), this protein is Peptide deformylase.